Here is a 255-residue protein sequence, read N- to C-terminus: Hydroxyacylglutathione hydrolase (255 aa).

Zn(2+) contacts are provided by His53, His55, Asp57, His58, His111, Asp128, and His166.

The protein belongs to the metallo-beta-lactamase superfamily. Glyoxalase II family. As to quaternary structure, monomer. It depends on Zn(2+) as a cofactor.

It carries out the reaction an S-(2-hydroxyacyl)glutathione + H2O = a 2-hydroxy carboxylate + glutathione + H(+). The protein operates within secondary metabolite metabolism; methylglyoxal degradation; (R)-lactate from methylglyoxal: step 2/2. Its function is as follows. Thiolesterase that catalyzes the hydrolysis of S-D-lactoyl-glutathione to form glutathione and D-lactic acid. The sequence is that of Hydroxyacylglutathione hydrolase from Nitrosomonas eutropha (strain DSM 101675 / C91 / Nm57).